Consider the following 518-residue polypeptide: ATP synthase F(1) complex catalytic subunit beta, mitochondrial (518 aa).

Gly-199, Val-200, Gly-201, Lys-202, Thr-203, and Val-204 together coordinate ADP. Gly-199 is a binding site for ATP. Phosphate contacts are provided by Gly-199, Val-200, Gly-201, Lys-202, and Thr-203. Residues Gly-201, Lys-202, Thr-203, and Val-204 each contribute to the ATP site. Residue Thr-203 coordinates Mg(2+). Glu-228 provides a ligand contact to Mg(2+). Position 229 (Arg-229) interacts with ATP.

This sequence belongs to the ATPase alpha/beta chains family. Homotrimer. Component of the ATP synthase complex composed at least of ATP5F1A/subunit alpha, ATP5F1B/subunit beta, ATP5MC1/subunit c (homooctomer), MT-ATP6/subunit a, MT-ATP8/subunit 8, ATP5ME/subunit e, ATP5MF/subunit f, ATP5MG/subunit g, ATP5MK/subunit k, ATP5MJ/subunit j, ATP5F1C/subunit gamma, ATP5F1D/subunit delta, ATP5F1E/subunit epsilon, ATP5PF/subunit F6, ATP5PB/subunit b, ATP5PD/subunit d, ATP5PO/subunit OSCP. ATP synthase complex consists of a soluble F(1) head domain (subunits alpha(3) and beta(3)) - the catalytic core - and a membrane F(0) domain - the membrane proton channel (subunits c, a, 8, e, f, g, k and j). These two domains are linked by a central stalk (subunits gamma, delta, and epsilon) rotating inside the F1 region and a stationary peripheral stalk (subunits F6, b, d, and OSCP).

Its subcellular location is the mitochondrion inner membrane. The catalysed reaction is ATP + H2O + 4 H(+)(in) = ADP + phosphate + 5 H(+)(out). In terms of biological role, catalytic subunit beta, of the mitochondrial membrane ATP synthase complex (F(1)F(0) ATP synthase or Complex V) that produces ATP from ADP in the presence of a proton gradient across the membrane which is generated by electron transport complexes of the respiratory chain. ATP synthase complex consist of a soluble F(1) head domain - the catalytic core - and a membrane F(1) domain - the membrane proton channel. These two domains are linked by a central stalk rotating inside the F(1) region and a stationary peripheral stalk. During catalysis, ATP synthesis in the catalytic domain of F(1) is coupled via a rotary mechanism of the central stalk subunits to proton translocation. In vivo, can only synthesize ATP although its ATP hydrolase activity can be activated artificially in vitro. With the subunit alpha (ATP5F1A), forms the catalytic core in the F(1) domain. The sequence is that of ATP synthase F(1) complex catalytic subunit beta, mitochondrial from Cyprinus carpio (Common carp).